A 101-amino-acid polypeptide reads, in one-letter code: Large ribosomal subunit protein eL30 (101 aa).

The protein belongs to the eukaryotic ribosomal protein eL30 family.

The protein is Large ribosomal subunit protein eL30 (rpl30e) of Thermococcus celer.